Reading from the N-terminus, the 338-residue chain is Glycerol-3-phosphate dehydrogenase [NAD(P)+] 1 (338 aa).

Residues Ser11, Trp12, His32, Arg33, and Lys109 each coordinate NADPH. Sn-glycerol 3-phosphate-binding residues include Lys109, Gly140, and Ser142. NADPH is bound at residue Ala144. Sn-glycerol 3-phosphate-binding residues include Lys195, Asp248, Ser258, Arg259, and Asn260. Residue Lys195 is the Proton acceptor of the active site. Arg259 provides a ligand contact to NADPH. Val283 and Glu285 together coordinate NADPH.

This sequence belongs to the NAD-dependent glycerol-3-phosphate dehydrogenase family.

It is found in the cytoplasm. It catalyses the reaction sn-glycerol 3-phosphate + NAD(+) = dihydroxyacetone phosphate + NADH + H(+). It carries out the reaction sn-glycerol 3-phosphate + NADP(+) = dihydroxyacetone phosphate + NADPH + H(+). Its pathway is membrane lipid metabolism; glycerophospholipid metabolism. Functionally, catalyzes the reduction of the glycolytic intermediate dihydroxyacetone phosphate (DHAP) to sn-glycerol 3-phosphate (G3P), the key precursor for phospholipid synthesis. In Lactobacillus delbrueckii subsp. bulgaricus (strain ATCC 11842 / DSM 20081 / BCRC 10696 / JCM 1002 / NBRC 13953 / NCIMB 11778 / NCTC 12712 / WDCM 00102 / Lb 14), this protein is Glycerol-3-phosphate dehydrogenase [NAD(P)+] 1.